The chain runs to 252 residues: Hydroxyacylglutathione hydrolase (252 aa).

Residues H54, H56, D58, H59, H113, D132, and H170 each coordinate Zn(2+).

It belongs to the metallo-beta-lactamase superfamily. Glyoxalase II family. Monomer. It depends on Zn(2+) as a cofactor.

The enzyme catalyses an S-(2-hydroxyacyl)glutathione + H2O = a 2-hydroxy carboxylate + glutathione + H(+). It functions in the pathway secondary metabolite metabolism; methylglyoxal degradation; (R)-lactate from methylglyoxal: step 2/2. Thiolesterase that catalyzes the hydrolysis of S-D-lactoyl-glutathione to form glutathione and D-lactic acid. The sequence is that of Hydroxyacylglutathione hydrolase from Synechococcus sp. (strain JA-2-3B'a(2-13)) (Cyanobacteria bacterium Yellowstone B-Prime).